Consider the following 258-residue polypeptide: Acyl-[acyl-carrier-protein]--UDP-N-acetylglucosamine O-acyltransferase (258 aa).

The protein belongs to the transferase hexapeptide repeat family. LpxA subfamily. In terms of assembly, homotrimer.

The protein resides in the cytoplasm. It catalyses the reaction a (3R)-hydroxyacyl-[ACP] + UDP-N-acetyl-alpha-D-glucosamine = a UDP-3-O-[(3R)-3-hydroxyacyl]-N-acetyl-alpha-D-glucosamine + holo-[ACP]. It functions in the pathway glycolipid biosynthesis; lipid IV(A) biosynthesis; lipid IV(A) from (3R)-3-hydroxytetradecanoyl-[acyl-carrier-protein] and UDP-N-acetyl-alpha-D-glucosamine: step 1/6. Functionally, involved in the biosynthesis of lipid A, a phosphorylated glycolipid that anchors the lipopolysaccharide to the outer membrane of the cell. This chain is Acyl-[acyl-carrier-protein]--UDP-N-acetylglucosamine O-acyltransferase, found in Pseudomonas putida (strain ATCC 47054 / DSM 6125 / CFBP 8728 / NCIMB 11950 / KT2440).